The chain runs to 333 residues: Acetyltransferase Pat (333 aa).

3',5'-cyclic AMP is bound by residues 88 to 91 (GEIA), 98 to 99 (RS), and R138. The region spanning 156–318 (LMLRPVLPGD…GELSLGREMV (163 aa)) is the N-acetyltransferase domain. H173 is a binding site for substrate. D214 contacts Mg(2+). Substrate contacts are provided by residues 238–240 (FTV), 246–251 (GRGIGS), N277, and R286.

In terms of assembly, homodimer. Mg(2+) serves as cofactor.

Its activity is regulated as follows. Autoinhibited and allosterically activated by 3,5-cyclic adenosine monophosphate (cAMP). An extensive conformational rearrangement relieves this autoinhibition by means of a substrate-mimicking lid that covers the protein-substrate binding surface. Catalyzes specifically the acetylation of the epsilon-amino group of a highly conserved lysine residue in acetyl-CoA synthetase (ACS). This acetylation results in the inactivation of ACS activity and could be important for mycobacteria to adjust to environmental changes. The chain is Acetyltransferase Pat from Mycobacterium tuberculosis (strain ATCC 25618 / H37Rv).